The primary structure comprises 380 residues: Erythronate-4-phosphate dehydrogenase (380 aa).

Serine 45 and threonine 66 together coordinate substrate. Residues aspartate 146 and threonine 174 each coordinate NAD(+). Arginine 207 is an active-site residue. Aspartate 231 is a binding site for NAD(+). Glutamate 236 is a catalytic residue. Histidine 253 (proton donor) is an active-site residue. An NAD(+)-binding site is contributed by glycine 256. Tyrosine 257 provides a ligand contact to substrate.

This sequence belongs to the D-isomer specific 2-hydroxyacid dehydrogenase family. PdxB subfamily. As to quaternary structure, homodimer.

The protein resides in the cytoplasm. The catalysed reaction is 4-phospho-D-erythronate + NAD(+) = (R)-3-hydroxy-2-oxo-4-phosphooxybutanoate + NADH + H(+). It functions in the pathway cofactor biosynthesis; pyridoxine 5'-phosphate biosynthesis; pyridoxine 5'-phosphate from D-erythrose 4-phosphate: step 2/5. Its function is as follows. Catalyzes the oxidation of erythronate-4-phosphate to 3-hydroxy-2-oxo-4-phosphonooxybutanoate. The polypeptide is Erythronate-4-phosphate dehydrogenase (Pseudomonas fluorescens (strain Pf0-1)).